We begin with the raw amino-acid sequence, 547 residues long: Delta-guaiene synthase 1 (547 aa).

3 residues coordinate Mg(2+): D299, D303, and D444. The short motif at D299–D303 is the DDXXD motif element.

This sequence belongs to the terpene synthase family. Mg(2+) serves as cofactor.

It catalyses the reaction (2E,6E)-farnesyl diphosphate = delta-guaiene + diphosphate. The enzyme catalyses (2E,6E)-farnesyl diphosphate = alpha-guaiene + diphosphate. Its pathway is secondary metabolite biosynthesis; terpenoid biosynthesis. Sesquiterpene synthase involved in the biosynthesis of delta-guaiene (81.2%) and alpha-guaiene (18.1%), two structures composed of five- and seven-membered rings. Also produces 0.7% of alpha-humulene. The polypeptide is Delta-guaiene synthase 1 (C2) (Aquilaria crassna (Eagle wood)).